A 227-amino-acid polypeptide reads, in one-letter code: Probable N-acetyltransferase family 8 member 5 (227 aa).

A run of 3 helical transmembrane segments spans residues Ile-29–Met-49, Ile-53–Leu-73, and Ile-201–Ser-221. Residues Phe-69–Ile-213 enclose the N-acetyltransferase domain.

This sequence belongs to the camello family.

The protein resides in the membrane. Its function is as follows. May play a role in regulation of gastrulation. The chain is Probable N-acetyltransferase family 8 member 5 from Mus musculus (Mouse).